A 485-amino-acid polypeptide reads, in one-letter code: Glutamyl-tRNA(Gln) amidotransferase subunit A (485 aa).

Catalysis depends on charge relay system residues Lys-79 and Ser-154. Ser-178 (acyl-ester intermediate) is an active-site residue.

This sequence belongs to the amidase family. GatA subfamily. In terms of assembly, heterotrimer of A, B and C subunits.

The enzyme catalyses L-glutamyl-tRNA(Gln) + L-glutamine + ATP + H2O = L-glutaminyl-tRNA(Gln) + L-glutamate + ADP + phosphate + H(+). Allows the formation of correctly charged Gln-tRNA(Gln) through the transamidation of misacylated Glu-tRNA(Gln) in organisms which lack glutaminyl-tRNA synthetase. The reaction takes place in the presence of glutamine and ATP through an activated gamma-phospho-Glu-tRNA(Gln). The sequence is that of Glutamyl-tRNA(Gln) amidotransferase subunit A from Staphylococcus epidermidis (strain ATCC 12228 / FDA PCI 1200).